A 319-amino-acid polypeptide reads, in one-letter code: Beta-ketoacyl-[acyl-carrier-protein] synthase III (319 aa).

Residues Cys115 and His246 contribute to the active site. The ACP-binding stretch occupies residues 247–251 (QANLR). Asn276 is an active-site residue.

This sequence belongs to the thiolase-like superfamily. FabH family. In terms of assembly, homodimer.

The protein resides in the cytoplasm. The catalysed reaction is malonyl-[ACP] + acetyl-CoA + H(+) = 3-oxobutanoyl-[ACP] + CO2 + CoA. It functions in the pathway lipid metabolism; fatty acid biosynthesis. Catalyzes the condensation reaction of fatty acid synthesis by the addition to an acyl acceptor of two carbons from malonyl-ACP. Catalyzes the first condensation reaction which initiates fatty acid synthesis and may therefore play a role in governing the total rate of fatty acid production. Possesses both acetoacetyl-ACP synthase and acetyl transacylase activities. Its substrate specificity determines the biosynthesis of branched-chain and/or straight-chain of fatty acids. This Coxiella burnetii (strain CbuK_Q154) (Coxiella burnetii (strain Q154)) protein is Beta-ketoacyl-[acyl-carrier-protein] synthase III.